Consider the following 425-residue polypeptide: UDP-N-acetylglucosamine 1-carboxyvinyltransferase (425 aa).

Phosphoenolpyruvate is bound at residue 23–24 (KN). Arg100 is a UDP-N-acetyl-alpha-D-glucosamine binding site. The active-site Proton donor is the Cys124. Cys124 is modified (2-(S-cysteinyl)pyruvic acid O-phosphothioketal). 2 residues coordinate UDP-N-acetyl-alpha-D-glucosamine: Asp313 and Ile335.

Belongs to the EPSP synthase family. MurA subfamily.

Its subcellular location is the cytoplasm. The catalysed reaction is phosphoenolpyruvate + UDP-N-acetyl-alpha-D-glucosamine = UDP-N-acetyl-3-O-(1-carboxyvinyl)-alpha-D-glucosamine + phosphate. Its pathway is cell wall biogenesis; peptidoglycan biosynthesis. Cell wall formation. Adds enolpyruvyl to UDP-N-acetylglucosamine. The protein is UDP-N-acetylglucosamine 1-carboxyvinyltransferase of Wolbachia sp. subsp. Brugia malayi (strain TRS).